The chain runs to 181 residues: Trafficking protein particle complex subunit 3-like protein (181 aa).

A lipid anchor (S-palmitoyl cysteine) is attached at cysteine 68.

Belongs to the TRAPP small subunits family. BET3 subfamily. In terms of assembly, homodimer. Component of the multisubunit TRAPP (transport protein particle) complex, which includes at least TRAPPC2, TRAPPC2L, TRAPPC3, TRAPPC3L, TRAPPC4, TRAPPC5, TRAPPC8, TRAPPC9, TRAPPC10, TRAPPC11 and TRAPPC12.

It localises to the golgi apparatus. The protein resides in the cis-Golgi network. Its subcellular location is the endoplasmic reticulum. Functionally, may play a role in vesicular transport from endoplasmic reticulum to Golgi. This Mus musculus (Mouse) protein is Trafficking protein particle complex subunit 3-like protein (Trappc3l).